Here is a 229-residue protein sequence, read N- to C-terminus: Clathrin light chain B (229 aa).

Low complexity-rich tracts occupy residues 1 to 17 and 45 to 58; these read MAEDFGFFSSSESGAPE and GAPAASQVASAQPG. The disordered stretch occupies residues 1-70; the sequence is MAEDFGFFSS…SGAGSEDMST (70 aa). Residues S11 and S13 each carry the phosphoserine modification. Residues 93-155 form an involved in binding clathrin heavy chain region; sequence ADRLTQEPES…QVEKNKINNR (63 aa). A Phosphothreonine modification is found at T187. A disulfide bridge connects residues C199 and C209. K204 bears the N6-acetyllysine mark. Position 217 is a phosphoserine (S217).

Belongs to the clathrin light chain family. As to quaternary structure, clathrin coats are formed from molecules containing 3 heavy chains and 3 light chains. Interacts (via N-terminus) with HIP1. Interacts with HIP1R.

Its subcellular location is the cytoplasmic vesicle membrane. It is found in the membrane. The protein localises to the coated pit. Its function is as follows. Clathrin is the major protein of the polyhedral coat of coated pits and vesicles. The protein is Clathrin light chain B (Cltb) of Mus musculus (Mouse).